Reading from the N-terminus, the 955-residue chain is Glycine dehydrogenase (decarboxylating) (955 aa).

Position 702 is an N6-(pyridoxal phosphate)lysine (lysine 702).

It belongs to the GcvP family. As to quaternary structure, the glycine cleavage system is composed of four proteins: P, T, L and H. Requires pyridoxal 5'-phosphate as cofactor.

The enzyme catalyses N(6)-[(R)-lipoyl]-L-lysyl-[glycine-cleavage complex H protein] + glycine + H(+) = N(6)-[(R)-S(8)-aminomethyldihydrolipoyl]-L-lysyl-[glycine-cleavage complex H protein] + CO2. Functionally, the glycine cleavage system catalyzes the degradation of glycine. The P protein binds the alpha-amino group of glycine through its pyridoxal phosphate cofactor; CO(2) is released and the remaining methylamine moiety is then transferred to the lipoamide cofactor of the H protein. The protein is Glycine dehydrogenase (decarboxylating) of Bordetella avium (strain 197N).